Reading from the N-terminus, the 663-residue chain is Drug sensory protein A (663 aa).

3 helical membrane-spanning segments follow: residues 32-52 (LMAA…FWAV), 165-185 (VFIP…GINP), and 199-219 (VTIA…VFNA). An HAMP domain is found at 220-272 (LTITQPIKELLLGVKNIAAGNFKQRITLPFGGELGELIVNFNEMAERLERYEA). In terms of domain architecture, PAS spans 281–351 (EKAKLDTLVS…QPLRELAADQ (71 aa)). Residues 429 to 656 (NVSHELRTPL…TFWFDLAVYQ (228 aa)) form the Histidine kinase domain. The residue at position 432 (H432) is a Phosphohistidine; by autocatalysis.

The protein resides in the cell membrane. It carries out the reaction ATP + protein L-histidine = ADP + protein N-phospho-L-histidine.. The polypeptide is Drug sensory protein A (dspA) (Synechocystis sp. (strain ATCC 27184 / PCC 6803 / Kazusa)).